A 301-amino-acid polypeptide reads, in one-letter code: Probable alpha-L-glutamate ligase (301 aa).

An ATP-grasp domain is found at 104-287 (LQLLSRRGVG…IASQIIAFIE (184 aa)). ATP contacts are provided by residues K141, 178-179 (EF), D187, and 211-213 (RSN). The Mg(2+) site is built by D248, E260, and N262. Residues D248, E260, and N262 each contribute to the Mn(2+) site.

The protein belongs to the RimK family. Mg(2+) serves as cofactor. Requires Mn(2+) as cofactor.

In Hydrogenovibrio crunogenus (strain DSM 25203 / XCL-2) (Thiomicrospira crunogena), this protein is Probable alpha-L-glutamate ligase.